Here is a 234-residue protein sequence, read N- to C-terminus: Purine nucleoside phosphorylase DeoD-type (234 aa).

Histidine 5 serves as a coordination point for a purine D-ribonucleoside. Phosphate contacts are provided by residues glycine 21, arginine 25, arginine 44, and 88–91; that span reads RIGT. Residues 180 to 182 and 204 to 205 contribute to the a purine D-ribonucleoside site; these read DME and SD. The Proton donor role is filled by aspartate 205.

It belongs to the PNP/UDP phosphorylase family. Homohexamer; trimer of homodimers.

The enzyme catalyses a purine D-ribonucleoside + phosphate = a purine nucleobase + alpha-D-ribose 1-phosphate. It carries out the reaction a purine 2'-deoxy-D-ribonucleoside + phosphate = a purine nucleobase + 2-deoxy-alpha-D-ribose 1-phosphate. In terms of biological role, catalyzes the reversible phosphorolytic breakdown of the N-glycosidic bond in the beta-(deoxy)ribonucleoside molecules, with the formation of the corresponding free purine bases and pentose-1-phosphate. The polypeptide is Purine nucleoside phosphorylase DeoD-type (Buchnera aphidicola subsp. Acyrthosiphon pisum (strain 5A)).